A 486-amino-acid chain; its full sequence is Secreted protein C (486 aa).

A signal peptide spans 1–22 (MKINIILLFVGLILAFAVLSNA). Residues 30–332 (GVNPFDNNNS…SGSHGGSSSH (303 aa)) form a disordered region. Asn-37 carries N-linked (GlcNAc...) asparagine glycosylation. Residues 41–60 (SGSGSGSGGGSSSSGSGTGQ) show a composition bias toward gly residues. The span at 61–318 (SSGTVSSSGS…TGSSEYSSSS (258 aa)) shows a compositional bias: low complexity. Asn-73, Asn-74, Asn-83, Asn-112, Asn-129, Asn-149, and Asn-174 each carry an N-linked (GlcNAc...) asparagine glycan.

The protein belongs to the Sct family.

Its subcellular location is the secreted. The polypeptide is Secreted protein C (Dictyostelium discoideum (Social amoeba)).